The primary structure comprises 392 residues: Protein DJ-1 homolog A (392 aa).

PfpI endopeptidase domains are found at residues 6 to 174 (KTVL…EQLF) and 212 to 378 (PQIL…EKFY).

The protein belongs to the peptidase C56 family. As to quaternary structure, homodimer. Interacts with CSD1 and GPX2.

The protein localises to the cytoplasm. The protein resides in the cytosol. It localises to the nucleus. In terms of biological role, involved in oxidative stress response. Confers protection against diverse stresses by binding both CSD1 and GPX2 and mediating the cytosolic activation of the Cu-Zn-dependent superoxide dismutase activity of CSD1. The sequence is that of Protein DJ-1 homolog A (DJ1A) from Arabidopsis thaliana (Mouse-ear cress).